We begin with the raw amino-acid sequence, 181 residues long: MNKKLYFPLILFLILVFAFAVQLLRNAQGDDPKALESALIGKPVPLRTLQDLFEEKQYGIEIFQQGKPILLNVWATWCPTCYAEHQYLNKLAQQGVTIIGIDYKDKSAQAIKWLKDLGNPYQIVLKDEKGSNGLDLGVYGAPETFVIDGQGIIHYRHAGDLNQKVWDEKIQPIYQKLVERK.

Topologically, residues 1-3 (MNK) are cytoplasmic. The helical transmembrane segment at 4–24 (KLYFPLILFLILVFAFAVQLL) threads the bilayer. Residues 25 to 181 (RNAQGDDPKA…PIYQKLVERK (157 aa)) lie on the Periplasmic side of the membrane. One can recognise a Thioredoxin domain in the interval 38 to 175 (ALIGKPVPLR…WDEKIQPIYQ (138 aa)). Cysteine 78 and cysteine 81 are disulfide-bonded.

The protein belongs to the thioredoxin family. DsbE subfamily.

Its subcellular location is the cell inner membrane. Functionally, involved in disulfide bond formation. Catalyzes a late, reductive step in the assembly of periplasmic c-type cytochromes, probably the reduction of disulfide bonds of the apocytochrome c to allow covalent linkage with the heme. Possible subunit of a heme lyase. This Pasteurella multocida (strain Pm70) protein is Thiol:disulfide interchange protein DsbE (dsbE).